The sequence spans 475 residues: Ribulose bisphosphate carboxylase large chain (475 aa).

Positions 1-2 (MS) are excised as a propeptide. N-acetylproline is present on proline 3. At lysine 14 the chain carries N6,N6,N6-trimethyllysine. The substrate site is built by asparagine 123 and threonine 173. Lysine 175 serves as the catalytic Proton acceptor. Lysine 177 is a binding site for substrate. Mg(2+) contacts are provided by lysine 201, aspartate 203, and glutamate 204. Lysine 201 is modified (N6-carboxylysine). The active-site Proton acceptor is histidine 294. Substrate-binding residues include arginine 295, histidine 327, and serine 379.

This sequence belongs to the RuBisCO large chain family. Type I subfamily. As to quaternary structure, heterohexadecamer of 8 large chains and 8 small chains; disulfide-linked. The disulfide link is formed within the large subunit homodimers. Mg(2+) serves as cofactor. The disulfide bond which can form in the large chain dimeric partners within the hexadecamer appears to be associated with oxidative stress and protein turnover.

It is found in the plastid. It localises to the chloroplast. It carries out the reaction 2 (2R)-3-phosphoglycerate + 2 H(+) = D-ribulose 1,5-bisphosphate + CO2 + H2O. It catalyses the reaction D-ribulose 1,5-bisphosphate + O2 = 2-phosphoglycolate + (2R)-3-phosphoglycerate + 2 H(+). Functionally, ruBisCO catalyzes two reactions: the carboxylation of D-ribulose 1,5-bisphosphate, the primary event in carbon dioxide fixation, as well as the oxidative fragmentation of the pentose substrate in the photorespiration process. Both reactions occur simultaneously and in competition at the same active site. This Staurastrum punctulatum (Green alga) protein is Ribulose bisphosphate carboxylase large chain.